Here is a 343-residue protein sequence, read N- to C-terminus: L-threonine 3-dehydrogenase (343 aa).

Zn(2+) is bound at residue Cys38. Catalysis depends on charge relay system residues Thr40 and His43. Zn(2+)-binding residues include His63, Glu64, Cys93, Cys96, Cys99, and Cys107. Residues Ile175, Asp195, Arg200, 262–264, and 286–287 each bind NAD(+); these read LGI and IY.

This sequence belongs to the zinc-containing alcohol dehydrogenase family. As to quaternary structure, homotetramer. The cofactor is Zn(2+).

It localises to the cytoplasm. It carries out the reaction L-threonine + NAD(+) = (2S)-2-amino-3-oxobutanoate + NADH + H(+). It participates in amino-acid degradation; L-threonine degradation via oxydo-reductase pathway; glycine from L-threonine: step 1/2. In terms of biological role, catalyzes the NAD(+)-dependent oxidation of L-threonine to 2-amino-3-ketobutyrate. The polypeptide is L-threonine 3-dehydrogenase (Burkholderia thailandensis (strain ATCC 700388 / DSM 13276 / CCUG 48851 / CIP 106301 / E264)).